We begin with the raw amino-acid sequence, 339 residues long: GTPase Obg (339 aa).

The Obg domain occupies 1–159 (MKFVDEAFVR…RELKLELKLL (159 aa)). Residues 127–147 (NTHFKSSTNRAPRRTTSGEEG) are disordered. The 174-residue stretch at 160–333 (ADVGLLGLPN…LCYDLMSFLE (174 aa)) folds into the OBG-type G domain. Residues 166–173 (GLPNAGKS), 191–195 (FTTLY), 213–216 (DIPG), 283–286 (NKID), and 314–316 (SAI) each bind GTP. Positions 173 and 193 each coordinate Mg(2+).

It belongs to the TRAFAC class OBG-HflX-like GTPase superfamily. OBG GTPase family. Monomer. Mg(2+) is required as a cofactor.

The protein resides in the cytoplasm. Its function is as follows. An essential GTPase which binds GTP, GDP and possibly (p)ppGpp with moderate affinity, with high nucleotide exchange rates and a fairly low GTP hydrolysis rate. Plays a role in control of the cell cycle, stress response, ribosome biogenesis and in those bacteria that undergo differentiation, in morphogenesis control. This is GTPase Obg from Coxiella burnetii (strain CbuG_Q212) (Coxiella burnetii (strain Q212)).